A 559-amino-acid chain; its full sequence is Formate--tetrahydrofolate ligase (559 aa).

ATP is bound at residue 68–75; the sequence is TPAGEGKT.

Belongs to the formate--tetrahydrofolate ligase family.

The catalysed reaction is (6S)-5,6,7,8-tetrahydrofolate + formate + ATP = (6R)-10-formyltetrahydrofolate + ADP + phosphate. The protein operates within one-carbon metabolism; tetrahydrofolate interconversion. In Moorella thermoacetica (strain ATCC 39073 / JCM 9320), this protein is Formate--tetrahydrofolate ligase.